The primary structure comprises 223 residues: Killer cell lectin-like receptor subfamily B member 1B allele B (223 aa).

The Cytoplasmic portion of the chain corresponds to M1–K43. The short motif at L6–L11 is the ITIM motif element. Positions C32–P35 match the LCK-binding motif motif. The chain crosses the membrane as a helical; Signal-anchor for type II membrane protein span at residues F44–L64. At S65 to S223 the chain is on the extracellular side. The region spanning H101–Q211 is the C-type lectin domain. 2 cysteine pairs are disulfide-bonded: C122-C210 and C189-C202.

As to quaternary structure, homodimer; disulfide-linked. Interacts with tyrosine kinase LCK. Binds PTPN6/SHP-1 in a phosphorylation-dependent manner. As to expression, expressed in NK cells and a subset of T-cells.

The protein resides in the membrane. Functionally, receptor for CLEC2D/OCIL. Ligand-binding contributes to inhibition of cytotoxic natural killer (NK) cells. May mediate MHC class I-independent 'missing-self' recognition of allografts, tumor cells and virus-infected cells. In Mus musculus (Mouse), this protein is Killer cell lectin-like receptor subfamily B member 1B allele B (Klrb1b).